A 230-amino-acid polypeptide reads, in one-letter code: Large ribosomal subunit protein uL1 (230 aa).

The protein belongs to the universal ribosomal protein uL1 family. Part of the 50S ribosomal subunit.

Its function is as follows. Binds directly to 23S rRNA. The L1 stalk is quite mobile in the ribosome, and is involved in E site tRNA release. Protein L1 is also a translational repressor protein, it controls the translation of the L11 operon by binding to its mRNA. This is Large ribosomal subunit protein uL1 from Desulfitobacterium hafniense (strain DSM 10664 / DCB-2).